Consider the following 384-residue polypeptide: DNA replication and repair protein RecF (384 aa).

43–50 (GENGSGKT) is a binding site for ATP.

It belongs to the RecF family.

The protein localises to the cytoplasm. The RecF protein is involved in DNA metabolism; it is required for DNA replication and normal SOS inducibility. RecF binds preferentially to single-stranded, linear DNA. It also seems to bind ATP. This chain is DNA replication and repair protein RecF, found in Brucella suis biovar 1 (strain 1330).